The chain runs to 455 residues: Ribulose bisphosphate carboxylase large chain (455 aa).

Lys-5 bears the N6,N6,N6-trimethyllysine mark. 2 residues coordinate substrate: Asn-114 and Thr-164. Lys-166 acts as the Proton acceptor in catalysis. A substrate-binding site is contributed by Lys-168. Mg(2+)-binding residues include Lys-192, Asp-194, and Glu-195. N6-carboxylysine is present on Lys-192. Residue His-285 is the Proton acceptor of the active site. Substrate contacts are provided by Arg-286, His-318, and Ser-370.

Belongs to the RuBisCO large chain family. Type I subfamily. In terms of assembly, heterohexadecamer of 8 large chains and 8 small chains. Requires Mg(2+) as cofactor.

The protein resides in the plastid. It is found in the chloroplast. It catalyses the reaction 2 (2R)-3-phosphoglycerate + 2 H(+) = D-ribulose 1,5-bisphosphate + CO2 + H2O. The catalysed reaction is D-ribulose 1,5-bisphosphate + O2 = 2-phosphoglycolate + (2R)-3-phosphoglycerate + 2 H(+). Its function is as follows. RuBisCO catalyzes two reactions: the carboxylation of D-ribulose 1,5-bisphosphate, the primary event in carbon dioxide fixation, as well as the oxidative fragmentation of the pentose substrate in the photorespiration process. Both reactions occur simultaneously and in competition at the same active site. The chain is Ribulose bisphosphate carboxylase large chain from Tamarindus indica (Tamarind).